The sequence spans 172 residues: Crossover junction endodeoxyribonuclease RuvC (172 aa).

Catalysis depends on residues aspartate 8, glutamate 67, and aspartate 139. Positions 8, 67, and 139 each coordinate Mg(2+).

The protein belongs to the RuvC family. In terms of assembly, homodimer which binds Holliday junction (HJ) DNA. The HJ becomes 2-fold symmetrical on binding to RuvC with unstacked arms; it has a different conformation from HJ DNA in complex with RuvA. In the full resolvosome a probable DNA-RuvA(4)-RuvB(12)-RuvC(2) complex forms which resolves the HJ. It depends on Mg(2+) as a cofactor.

The protein localises to the cytoplasm. The catalysed reaction is Endonucleolytic cleavage at a junction such as a reciprocal single-stranded crossover between two homologous DNA duplexes (Holliday junction).. The RuvA-RuvB-RuvC complex processes Holliday junction (HJ) DNA during genetic recombination and DNA repair. Endonuclease that resolves HJ intermediates. Cleaves cruciform DNA by making single-stranded nicks across the HJ at symmetrical positions within the homologous arms, yielding a 5'-phosphate and a 3'-hydroxyl group; requires a central core of homology in the junction. The consensus cleavage sequence is 5'-(A/T)TT(C/G)-3'. Cleavage occurs on the 3'-side of the TT dinucleotide at the point of strand exchange. HJ branch migration catalyzed by RuvA-RuvB allows RuvC to scan DNA until it finds its consensus sequence, where it cleaves and resolves the cruciform DNA. The sequence is that of Crossover junction endodeoxyribonuclease RuvC from Hahella chejuensis (strain KCTC 2396).